The sequence spans 450 residues: Phosphoglucosamine mutase (450 aa).

Ser97 serves as the catalytic Phosphoserine intermediate. Residues Ser97, Asp236, Asp238, and Asp240 each contribute to the Mg(2+) site. Ser97 bears the Phosphoserine mark.

The protein belongs to the phosphohexose mutase family. The cofactor is Mg(2+). Post-translationally, activated by phosphorylation.

It catalyses the reaction alpha-D-glucosamine 1-phosphate = D-glucosamine 6-phosphate. Functionally, catalyzes the conversion of glucosamine-6-phosphate to glucosamine-1-phosphate. The protein is Phosphoglucosamine mutase of Prochlorococcus marinus (strain MIT 9312).